We begin with the raw amino-acid sequence, 554 residues long: Probable oligo-1,6-glucosidase 3 (554 aa).

Asp-199 (nucleophile) is an active-site residue. Catalysis depends on Glu-256, which acts as the Proton donor.

This sequence belongs to the glycosyl hydrolase 13 family.

The protein resides in the cytoplasm. It catalyses the reaction Hydrolysis of (1-&gt;6)-alpha-D-glucosidic linkages in some oligosaccharides produced from starch and glycogen by alpha-amylase, and in isomaltose.. The polypeptide is Probable oligo-1,6-glucosidase 3 (yugT) (Bacillus subtilis (strain 168)).